The chain runs to 255 residues: tRNA (guanine-N(1)-)-methyltransferase (255 aa).

Residues Gly-113 and 133–138 (IGDYVL) each bind S-adenosyl-L-methionine.

It belongs to the RNA methyltransferase TrmD family. In terms of assembly, homodimer.

The protein resides in the cytoplasm. It catalyses the reaction guanosine(37) in tRNA + S-adenosyl-L-methionine = N(1)-methylguanosine(37) in tRNA + S-adenosyl-L-homocysteine + H(+). Specifically methylates guanosine-37 in various tRNAs. This chain is tRNA (guanine-N(1)-)-methyltransferase, found in Enterobacter sp. (strain 638).